Consider the following 1770-residue polypeptide: U3 small nucleolar RNA-associated protein 10 (1770 aa).

A run of 2 helical transmembrane segments spans residues 499-519 (ILGL…FLSS) and 528-548 (LTFL…RLLA). One copy of the HEAT repeat lies at 1730–1768 (MVPIIAELLEDDNEEVESEVRGGLVRVMENVLGEPFDRY).

This sequence belongs to the HEATR1/UTP10 family. Component of the ribosomal small subunit (SSU) processome.

The protein localises to the nucleus. It localises to the nucleolus. The protein resides in the membrane. Its function is as follows. Involved in nucleolar processing of pre-18S ribosomal RNA. Involved in ribosome biosynthesis. The polypeptide is U3 small nucleolar RNA-associated protein 10 (Candida glabrata (strain ATCC 2001 / BCRC 20586 / JCM 3761 / NBRC 0622 / NRRL Y-65 / CBS 138) (Yeast)).